Consider the following 368-residue polypeptide: tRNA/tmRNA (uracil-C(5))-methyltransferase (368 aa).

Glutamine 192, tyrosine 220, asparagine 225, glutamate 241, and aspartate 301 together coordinate S-adenosyl-L-methionine. Cysteine 326 serves as the catalytic Nucleophile. Residue glutamate 360 is the Proton acceptor of the active site.

The protein belongs to the class I-like SAM-binding methyltransferase superfamily. RNA M5U methyltransferase family. TrmA subfamily.

It carries out the reaction uridine(54) in tRNA + S-adenosyl-L-methionine = 5-methyluridine(54) in tRNA + S-adenosyl-L-homocysteine + H(+). The enzyme catalyses uridine(341) in tmRNA + S-adenosyl-L-methionine = 5-methyluridine(341) in tmRNA + S-adenosyl-L-homocysteine + H(+). Its function is as follows. Dual-specificity methyltransferase that catalyzes the formation of 5-methyluridine at position 54 (m5U54) in all tRNAs, and that of position 341 (m5U341) in tmRNA (transfer-mRNA). The chain is tRNA/tmRNA (uracil-C(5))-methyltransferase from Actinobacillus pleuropneumoniae serotype 7 (strain AP76).